The sequence spans 237 residues: Ras-related protein Rab-23 (237 aa).

A GDP-binding site is contributed by alanine 19. Residues valine 20, glycine 21, lysine 22, serine 23, and serine 24 each contribute to the GTP site. Glycine 21, lysine 22, serine 23, serine 24, and aspartate 37 together coordinate GDP. Serine 23 is a binding site for Mg(2+). A Switch 1 motif is present at residues 28–46 (RYCKGIFTKDYKKTIGVDF). Position 38 (tyrosine 38) interacts with GTP. Lysine 40 is a GDP binding site. Threonine 41 provides a ligand contact to GTP. Threonine 41 and aspartate 64 together coordinate Mg(2+). A Switch 2 motif is present at residues 65 to 84 (TAGQEEFDAITKAYYRGAQA). Positions 67, 121, 122, 124, 151, 152, and 153 each coordinate GTP. GDP is bound by residues asparagine 121, lysine 122, and aspartate 124. GDP-binding residues include valine 152 and lysine 153. Serine 186 and serine 187 each carry phosphoserine. Residues 204-237 (QNSSSLNGGDVINLRPNKQRTKRTRNPFSSCSVP) are disordered. Cysteine 234 is modified (cysteine methyl ester). A lipid anchor (S-geranylgeranyl cysteine) is attached at cysteine 234. Positions 235–237 (SVP) are cleaved as a propeptide — removed in mature form.

Belongs to the small GTPase superfamily. Rab family. As to quaternary structure, interacts with SUFU. Mg(2+) serves as cofactor. As to expression, detected in brain neurons (at protein level). Forebrain and midbrain.

It is found in the cell membrane. The protein resides in the cytoplasm. The protein localises to the endosome membrane. It localises to the cytoplasmic vesicle. Its subcellular location is the autophagosome. It is found in the phagosome. The protein resides in the phagosome membrane. The enzyme catalyses GTP + H2O = GDP + phosphate + H(+). Its activity is regulated as follows. Regulated by guanine nucleotide exchange factors (GEFs) which promote the exchange of bound GDP for free GTP. Regulated by GTPase activating proteins (GAPs) which increase the GTP hydrolysis activity. Inhibited by GDP dissociation inhibitors (GDIs). The small GTPases Rab are key regulators of intracellular membrane trafficking, from the formation of transport vesicles to their fusion with membranes. Rabs cycle between an inactive GDP-bound form and an active GTP-bound form that is able to recruit to membranes different set of downstream effectors directly responsible for vesicle formation, movement, tethering and fusion. Plays a role in autophagic vacuole assembly, and mediates defense against pathogens, such as S.aureus, by promoting their capture by autophagosomes that then merge with lysosomes. Together with SUFU, prevents nuclear import of GLI1, and thereby inhibits GLI1 transcription factor activity. Regulates GLI1 in differentiating chondrocytes. Likewise, regulates GLI3 proteolytic processing and modulates GLI2 and GLI3 transcription factor activity. This is Ras-related protein Rab-23 from Mus musculus (Mouse).